The primary structure comprises 2534 residues: Highly reducing polyketide synthase easB (2534 aa).

Residues methionine 1–leucine 49 form a disordered region. The Ketosynthase family 3 (KS3) domain maps to leucine 49–alanine 470. Residues cysteine 222, histidine 356, and histidine 396 each act as for beta-ketoacyl synthase activity in the active site. Residues isoleucine 587–lysine 885 form a malonyl-CoA:ACP transacylase (MAT) domain region. Positions histidine 973–valine 1111 are N-terminal hotdog fold. Residues histidine 973–glycine 1273 form a dehydratase (DH) domain region. Residues histidine 973 to alanine 1277 enclose the PKS/mFAS DH domain. Histidine 1005 functions as the Proton acceptor; for dehydratase activity in the catalytic mechanism. The C-terminal hotdog fold stretch occupies residues threonine 1131–alanine 1277. The active-site Proton donor; for dehydratase activity is the aspartate 1193. The segment at lysine 1395–arginine 1625 is methyltransferase (CMet) domain. Residues glycine 1834–leucine 2146 form an enoyl reductase (ER) domain region. The Carrier domain occupies glutamate 2452–serine 2529. Residues alanine 2453–alanine 2526 form a ketoreductase (KR) domain region. Residue serine 2489 is modified to O-(pantetheine 4'-phosphoryl)serine.

It functions in the pathway antibiotic biosynthesis. Polyketide synthase; part of the gene cluster that mediates the biosynthesis of emericellamides, secondary metabolites acting as antibiotics. The biosynthesis of emericellamides initiates from the highly reducing polyketide synthase easB which catalyzes the formation of the linear polyketide chain. EasB produces several polyketides that can be further processed by the downstream enzymes. The polyketides are released from easB as linear polyketide carboxylic acids, which are converted to CoA thioesters by the acyl-CoA ligase easD. The substrates are then loaded onto the acyltransferase easC, which shuttles them to the first thiolation (T) domain of the nonribosomal peptide synthetase easA. EasA then performs condensation of the polyketides with one glycine, two alanine, one valine and one leucine residues. A last step of cyclization leads to the production of emericellamides. This is Highly reducing polyketide synthase easB from Emericella nidulans (strain FGSC A4 / ATCC 38163 / CBS 112.46 / NRRL 194 / M139) (Aspergillus nidulans).